The primary structure comprises 132 residues: Ig kappa chain V-III region MOPC 321 (132 aa).

The signal sequence occupies residues 1-20 (METDTLLLWVLLLWVPGSTG). The framework-1 stretch occupies residues 21–43 (DIVLTQSPASLAVSLGQRATISC). An intrachain disulfide couples C43 to C112. The interval 44 to 58 (RASKSVNTYGNSFMZ) is complementarity-determining-1. The tract at residues 59 to 73 (WYZZKPGZPPKLLIY) is framework-2. Residues 74-80 (RASNLZS) form a complementarity-determining-2 region. The framework-3 stretch occupies residues 81–112 (GIPARFSGSGSRTBFTLTIBPVZABDVATYFC). Residues 113–121 (ZZSBZBPWT) are complementarity-determining-3. The framework-4 stretch occupies residues 122 to 131 (FGSGTKLEIK).

The polypeptide is Ig kappa chain V-III region MOPC 321 (Mus musculus (Mouse)).